The following is a 1131-amino-acid chain: PPi-type phosphoenolpyruvate carboxykinase (1131 aa).

The protein belongs to the PPi-type phosphoenolpyruvate carboxykinase family. Monomer and trimer; forms heterotrimers with PEPCK2 and PEPCK3.

It catalyses the reaction oxaloacetate + diphosphate = phosphoenolpyruvate + phosphate + CO2. Inorganic pyrophosphate (PPi)-dependent phosphoenolpyruvate carboxykinase, which regulates the carbon flow of the central metabolism by fixing CO(2) to phosphoenolpyruvate to produce oxaloacetate. Can also produce pyruvate and diphosphate from phosphoenolpyruvate and phosphate. The protein is PPi-type phosphoenolpyruvate carboxykinase of Propionibacterium freudenreichii subsp. freudenreichii.